Consider the following 614-residue polypeptide: Ankyrin repeat domain-containing protein 55 (614 aa).

A disordered region spans residues 1 to 20; that stretch reads MMRQATMDFSTPSVFDQQRG. Residues 7–16 are compositionally biased toward polar residues; it reads MDFSTPSVFD. ANK repeat units lie at residues 26 to 55, 60 to 89, 93 to 125, 126 to 157, 161 to 190, 194 to 223, 230 to 260, 264 to 293, and 297 to 326; these read VDLTMVYQAASNGDVNALTAVIREDPSILE, EGCTPLMHAVSGRQADTVKLLLKMGANINM, YGRTSLCLATYLGWLEGCVSLLRNGAKHNIPDK, NGRLPLHAATAEPDMRLLTVLLQQSNISEINH, EGMTPLHWAAFHNQPQHTQMLLKKGADPTL, DFKTALHWAVQSGNRILCSIILSHHQGPSI, SGKTCVHIAAAAGFSDIIHELARVPECNLQA, DDRTPLHWAAAAGKAECVQSLLELGMDSNL, and NESTPLAYALYCGHTACVKLLSQESRTEPT. Disordered regions lie at residues 319–339, 354–375, 454–476, and 564–614; these read QESRTEPTRPPPSQSSRPQKK, KKEEQRAHQKDPSRDRYREEDT, TSHAGLSSAPHHMAQRSQKSRSE, and RNNL…SDEN. Residues 354–373 show a composition bias toward basic and acidic residues; the sequence is KKEEQRAHQKDPSRDRYREE. Serine 475 carries the phosphoserine modification.

This chain is Ankyrin repeat domain-containing protein 55 (ANKRD55), found in Homo sapiens (Human).